Here is a 359-residue protein sequence, read N- to C-terminus: Peptide chain release factor 1 (359 aa).

Glutamine 235 carries the N5-methylglutamine modification.

Belongs to the prokaryotic/mitochondrial release factor family. Methylated by PrmC. Methylation increases the termination efficiency of RF1.

Its subcellular location is the cytoplasm. Functionally, peptide chain release factor 1 directs the termination of translation in response to the peptide chain termination codons UAG and UAA. This is Peptide chain release factor 1 from Anaplasma marginale (strain Florida).